The sequence spans 1075 residues: Protein EXPORTIN 1A (1075 aa).

The region spanning 37–103 is the Importin N-terminal domain; sequence ADQILRDLQA…KNYISEVIVQ (67 aa). 12 HEAT repeats span residues 91–130, 135–171, 232–267, 336–373, 388–425, 474–513, 563–600, 612–649, 682–719, 756–793, 798–835, and 894–934; these read DGMK…QIVK, AKWT…EVFD, IFES…LNFG, SLLL…ELFD, MGLQ…LMIN, DTEK…SMAE, KFLK…KCKR, PFVS…AESD, LKDQ…IFLD, RETL…DYAR, ARES…CTLE, and ETGL…VLTD.

This sequence belongs to the exportin family. As to quaternary structure, interacts with RAN1. Expressed ubiquitously, with higher levels in stems, inflorescences and roots. Present in mature pollen grains, unpollinated pistils, and 2-week-old seedlings.

It is found in the nucleus. Its subcellular location is the nuclear pore complex. It localises to the nucleus membrane. Its function is as follows. Receptor for the leucine-rich nuclear export signal (NES). Binds cooperatively to the NES on its target protein and to the small GTPase Ran in its active GTP-bound form. Required for the maternal-to-embryonic transition and during gametophyte development. Involved in heat-induced oxidative stress basal resistance. The protein is Protein EXPORTIN 1A of Arabidopsis thaliana (Mouse-ear cress).